A 207-amino-acid chain; its full sequence is DNA-directed RNA polymerase subunit alpha (207 aa).

It belongs to the RNA polymerase alpha chain family. In terms of assembly, in plastids the minimal PEP RNA polymerase catalytic core is composed of four subunits: alpha, beta, beta', and beta''. When a (nuclear-encoded) sigma factor is associated with the core the holoenzyme is formed, which can initiate transcription.

It localises to the plastid. The protein localises to the chloroplast. It carries out the reaction RNA(n) + a ribonucleoside 5'-triphosphate = RNA(n+1) + diphosphate. Functionally, DNA-dependent RNA polymerase catalyzes the transcription of DNA into RNA using the four ribonucleoside triphosphates as substrates. In Euglena anabaena (Euglenaria anabaena), this protein is DNA-directed RNA polymerase subunit alpha (rpoA).